A 144-amino-acid chain; its full sequence is Large ribosomal subunit protein uL13 (144 aa).

Belongs to the universal ribosomal protein uL13 family. As to quaternary structure, part of the 50S ribosomal subunit.

Functionally, this protein is one of the early assembly proteins of the 50S ribosomal subunit, although it is not seen to bind rRNA by itself. It is important during the early stages of 50S assembly. This chain is Large ribosomal subunit protein uL13, found in Clostridium perfringens (strain 13 / Type A).